The chain runs to 508 residues: Photosystem II CP47 reaction center protein (508 aa).

6 helical membrane passes run 21 to 36, 101 to 115, 140 to 156, 203 to 218, 237 to 252, and 457 to 472; these read AVHIMHTALVSGWAGS, IVFSGLCFLAAIWHW, GIHLFLAGVACFGFGAF, IAAGTLGILAGLFHLS, VLSSSIAAVFFAAFVV, and TFALLFFFGHIWHGAR.

The protein belongs to the PsbB/PsbC family. PsbB subfamily. As to quaternary structure, PSII is composed of 1 copy each of membrane proteins PsbA, PsbB, PsbC, PsbD, PsbE, PsbF, PsbH, PsbI, PsbJ, PsbK, PsbL, PsbM, PsbT, PsbX, PsbY, PsbZ, Psb30/Ycf12, at least 3 peripheral proteins of the oxygen-evolving complex and a large number of cofactors. It forms dimeric complexes. It depends on Binds multiple chlorophylls. PSII binds additional chlorophylls, carotenoids and specific lipids. as a cofactor.

The protein localises to the plastid. It is found in the chloroplast thylakoid membrane. One of the components of the core complex of photosystem II (PSII). It binds chlorophyll and helps catalyze the primary light-induced photochemical processes of PSII. PSII is a light-driven water:plastoquinone oxidoreductase, using light energy to abstract electrons from H(2)O, generating O(2) and a proton gradient subsequently used for ATP formation. The sequence is that of Photosystem II CP47 reaction center protein from Brachypodium distachyon (Purple false brome).